The sequence spans 303 residues: Sulfate adenylyltransferase subunit 2 (303 aa).

The protein belongs to the PAPS reductase family. CysD subfamily. Heterodimer composed of CysD, the smaller subunit, and CysN.

The catalysed reaction is sulfate + ATP + H(+) = adenosine 5'-phosphosulfate + diphosphate. It functions in the pathway sulfur metabolism; hydrogen sulfide biosynthesis; sulfite from sulfate: step 1/3. Functionally, with CysN forms the ATP sulfurylase (ATPS) that catalyzes the adenylation of sulfate producing adenosine 5'-phosphosulfate (APS) and diphosphate, the first enzymatic step in sulfur assimilation pathway. APS synthesis involves the formation of a high-energy phosphoric-sulfuric acid anhydride bond driven by GTP hydrolysis by CysN coupled to ATP hydrolysis by CysD. This chain is Sulfate adenylyltransferase subunit 2, found in Phocaeicola vulgatus (strain ATCC 8482 / DSM 1447 / JCM 5826 / CCUG 4940 / NBRC 14291 / NCTC 11154) (Bacteroides vulgatus).